Consider the following 414-residue polypeptide: Carbohydrate sulfotransferase 12 (414 aa).

The Cytoplasmic segment spans residues M1–R5. Residues L6–W26 traverse the membrane as a helical; Signal-anchor for type II membrane protein segment. At D27–D414 the chain is on the lumenal side. Residues Q80–R125 are disordered. Basic and acidic residues predominate over residues E99–R125. N134 carries an N-linked (GlcNAc...) asparagine glycan. Residue P171 to N177 coordinates 3'-phosphoadenylyl sulfate. An N-linked (GlcNAc...) asparagine glycan is attached at N209. R245 to S253 is a 3'-phosphoadenylyl sulfate binding site. N-linked (GlcNAc...) asparagine glycans are attached at residues N280 and N370.

The protein belongs to the sulfotransferase 2 family. Widely expressed. Expressed a high level in spinal chord, heart, spleen, thyroid, pituitary gland, adrenal gland, peripheral blood leukocytes, thymus, lung, small intestine, fetal kidney, fetal spleen and fetal lung.

It is found in the golgi apparatus membrane. The enzyme catalyses chondroitin beta-D-glucuronate + n 3'-phosphoadenylyl sulfate = chondroitin 4'-sulfate + n adenosine 3',5'-bisphosphate + n H(+). Functionally, catalyzes the transfer of sulfate to position 4 of the N-acetylgalactosamine (GalNAc) residue of chondroitin and desulfated dermatan sulfate. Chondroitin sulfate constitutes the predominant proteoglycan present in cartilage and is distributed on the surfaces of many cells and extracellular matrices. Activity toward partially desulfated dermatan sulfate is however lower. Does not form 4, 6-di-O-sulfated GalNAc when chondroitin sulfate C is used as an acceptor. This Homo sapiens (Human) protein is Carbohydrate sulfotransferase 12 (CHST12).